The primary structure comprises 339 residues: MRVYYDRDADLNLIKGKKVAIVGYGSQGHAHALNLRDSGVKDIVIALREGSATAKKAEHEGFKVLSVAEAAKWADVVMMLTPDELQGDIYRESLEGNMKQGAALLFAHGLNVHFNLIEPRKDLDVLMVAPKGPGHTVRSEYLRGGGVPTLIAIAQDASGNAHDLGLSYASANGGGRAGIIETTFKEECETDLFGEQAVLCGGLVELIKAGFETLVEAGYAPEMAYFECLHEVKLIVDLIYEGGIANMNYSISNTAEYGEYVTGPRIVTPETKAEMKRVLNDIQSGTFTRNWMLENKVNQTSFKATRAKLAAHPIEEVGAKLRGMMPWISEKALVDKTRN.

Residues 1-182 (MRVYYDRDAD…GGGRAGIIET (182 aa)) form the KARI N-terminal Rossmann domain. Residues 24 to 27 (YGSQ), arginine 48, serine 51, threonine 53, and 83 to 86 (DELQ) contribute to the NADP(+) site. Histidine 108 is a catalytic residue. Residue glycine 134 coordinates NADP(+). In terms of domain architecture, KARI C-terminal knotted spans 183-328 (TFKEECETDL…AKLRGMMPWI (146 aa)). Residues aspartate 191, glutamate 195, glutamate 227, and glutamate 231 each contribute to the Mg(2+) site. Serine 252 contributes to the substrate binding site.

The protein belongs to the ketol-acid reductoisomerase family. It depends on Mg(2+) as a cofactor.

The enzyme catalyses (2R)-2,3-dihydroxy-3-methylbutanoate + NADP(+) = (2S)-2-acetolactate + NADPH + H(+). The catalysed reaction is (2R,3R)-2,3-dihydroxy-3-methylpentanoate + NADP(+) = (S)-2-ethyl-2-hydroxy-3-oxobutanoate + NADPH + H(+). The protein operates within amino-acid biosynthesis; L-isoleucine biosynthesis; L-isoleucine from 2-oxobutanoate: step 2/4. It functions in the pathway amino-acid biosynthesis; L-valine biosynthesis; L-valine from pyruvate: step 2/4. Involved in the biosynthesis of branched-chain amino acids (BCAA). Catalyzes an alkyl-migration followed by a ketol-acid reduction of (S)-2-acetolactate (S2AL) to yield (R)-2,3-dihydroxy-isovalerate. In the isomerase reaction, S2AL is rearranged via a Mg-dependent methyl migration to produce 3-hydroxy-3-methyl-2-ketobutyrate (HMKB). In the reductase reaction, this 2-ketoacid undergoes a metal-dependent reduction by NADPH to yield (R)-2,3-dihydroxy-isovalerate. The protein is Ketol-acid reductoisomerase (NADP(+)) of Methylobacterium radiotolerans (strain ATCC 27329 / DSM 1819 / JCM 2831 / NBRC 15690 / NCIMB 10815 / 0-1).